Reading from the N-terminus, the 281-residue chain is Ras-related protein Rab-40C (281 aa).

GTP-binding residues include serine 23, glycine 26, lysine 27, and serine 46. The interval 41–49 is switch-I; that stretch reads SPYAYSNGI. Mg(2+) is bound by residues serine 46 and aspartate 69. 3 residues coordinate GTP: glycine 72, asparagine 126, and arginine 127. Positions 72-88 are switch-II; that stretch reads GQGRFCTIFRSYSRGAQ. Positions 175–228 constitute an SOCS box domain; it reads LMRHGMEKIWRPNRVFSLQDLCCRAIVSCTPVHLIDKLPLPVTIKSHLKSFSMA. Residues 245–281 are disordered; that stretch reads SGAGGGGSKGNSLKRSKSIRPPQSPPQNCSRSNCKIS. Residues 270–281 are compositionally biased toward polar residues; sequence PQNCSRSNCKIS. Cysteine 273 is lipidated: S-palmitoyl cysteine. Residue cysteine 278 is the site of S-geranylgeranyl cysteine attachment.

This sequence belongs to the small GTPase superfamily. Rab family. As to quaternary structure, component of the cullin-5-RING E3 ubiquitin-protein ligase complex (ECS(RAB40C) complex) composed of CUL5, Elongin BC (ELOB and ELOC), RNF7/RBX2 and RAB40C. Interacts with protein phosphatase 6 (PP6) complex components ANKRD28, ANKRD52, PPP6C, PP6R1 and PP6R2; the interaction leads to ANKRD28 ubiquitination and decreased PP6 activity. Interacts with DAB2IP; DAB2IP acts as a GAP for RAB40C. The cofactor is Mg(2+).

The protein resides in the cell membrane. It is found in the cytoplasm. Its subcellular location is the cytosol. The protein localises to the golgi apparatus membrane. It carries out the reaction GTP + H2O = GDP + phosphate + H(+). It functions in the pathway protein modification; protein ubiquitination. Its activity is regulated as follows. Regulated by guanine nucleotide exchange factors (GEFs) which promote the exchange of bound GDP for free GTP. Regulated by GTPase activating proteins (GAPs) including DAB2IP, which increase the GTP hydrolysis activity. Inhibited by GDP dissociation inhibitors (GDIs). Functionally, RAB40C small GTPase acts as substrate-recognition component of the ECS(RAB40C) E3 ubiquitin ligase complex which mediates the ubiquitination and subsequent proteasomal degradation of target proteins. The Rab40 subfamily belongs to the Rab family that are key regulators of intracellular membrane trafficking, from the formation of transport vesicles to their fusion with membranes. Rabs cycle between an inactive GDP-bound form and an active GTP-bound form that is able to recruit to membranes different sets of downstream effectors directly responsible for vesicle formation, movement, tethering and fusion. As part of the ECS(RAB40C) complex, mediates ANKRD28 ubiquitination and degradation, thereby inhibiting protein phosphatase 6 (PP6) complex activity and focal adhesion assembly during cell migration. Also negatively regulate lipid droplets accumulation in a GTP-dependent manner. The protein is Ras-related protein Rab-40C of Homo sapiens (Human).